The sequence spans 637 residues: Sodium-dependent phosphate transport protein 2A (637 aa).

The Cytoplasmic segment spans residues 1–103 (MMSYSERLGG…LAQVGTKLLK (103 aa)). A phosphoserine mark is found at serine 14 and serine 34. Residues 104–125 (VPLMLAFLYLFVCSLDVLSSAF) form a helical membrane-spanning segment. At 126–145 (QLAGGKVAGDIFKDNAILSN) the chain is on the extracellular side. Residues 146–163 (PVAGLVVGILVTVLVQSS) form a helical membrane-spanning segment. Residues 164–165 (ST) are Cytoplasmic-facing. A helical membrane pass occupies residues 166-185 (STSIIVSMVSSGLLEVSSAI). Topologically, residues 186 to 345 (PIIMGSNIGT…HIFVDTGLPD (160 aa)) are extracellular. 2 disulfide bridges follow: cysteine 225–cysteine 520 and cysteine 306–cysteine 334. 2 N-linked (GlcNAc...) asparagine glycosylation sites follow: asparagine 298 and asparagine 328. Residues 346 to 368 (LAVGLILLAGSLVVLCTCLILLV) traverse the membrane as a helical segment. Over 369-410 (KMLNSLLKGQVMSSRRSSTQTDFPAPFTWVTGYFAMVVGASM) the chain is Cytoplasmic. A helical transmembrane segment spans residues 411-434 (TFVVQSSSVFTSAITPLIGLGVIS). The Extracellular segment spans residues 435-464 (IERAYPLTLGSNIGTTTTAILAALASPREK). A helical transmembrane segment spans residues 465–485 (LSSSFQIALCHFFFNISGILL). Over 486–511 (WYPLPCTRLPIRMAKALGKRTAKYRW) the chain is Cytoplasmic. Phosphothreonine; by PKC is present on threonine 506. Residues 512-532 (FAVLYLLVCFLLLPSLVFGIS) form a helical membrane-spanning segment. The Extracellular portion of the chain corresponds to 533-537 (MAGWQ). Residues 538 to 559 (AMVGVGTPFGALLAFVVLVNVL) form a helical membrane-spanning segment. Residues 560 to 637 (QSRSPGHLPK…LPAHHNATRL (78 aa)) lie on the Cytoplasmic side of the membrane. Serine 605 carries the phosphoserine modification. Threonine 621 is subject to Phosphothreonine. Position 623 is a phosphoserine (serine 623).

This sequence belongs to the SLC34A transporter family. As to quaternary structure, interacts via its C-terminal region with NHERF4. Interacts with NHERF1. Interacts with TMEM174; regulates SLC34A1 internalization by PTH and FGF23. As to expression, kidney.

It is found in the apical cell membrane. Its subcellular location is the cell membrane. It catalyses the reaction 3 Na(+)(out) + phosphate(out) = 3 Na(+)(in) + phosphate(in). Involved in actively transporting phosphate into cells via Na(+) cotransport in the renal brush border membrane. The cotransport has a Na(+):Pi stoichiometry of 3:1 and is electrogenic. This Mus musculus (Mouse) protein is Sodium-dependent phosphate transport protein 2A.